The primary structure comprises 419 residues: UPF0229 protein TERTU_3150 (419 aa).

A disordered region spans residues 63-111; the sequence is IFHHGSGGKNNRVLPGNDRFNGGDHIERPEQGQGGGGNGSGASDSGEGE. The span at 83–92 shows a compositional bias: basic and acidic residues; the sequence is NGGDHIERPE.

Belongs to the UPF0229 family.

This chain is UPF0229 protein TERTU_3150, found in Teredinibacter turnerae (strain ATCC 39867 / T7901).